We begin with the raw amino-acid sequence, 557 residues long: MFKSDIEIAQESKMKNIKNIAEKIGLTEEDIDLYGKYKCKISLDVLESNKDKKDGKLILVTAINPTPAGEGKSTVTVGLGQALWKKNKKAVIALREPSLGPVFGIKGGAAGGGYSQVVPMEDINLHFTGDMHAITSANNLLAAAIDNHIHQGNILKIDQRRILFKRVMDMNDRALRNVIVALGGKINGFPREDGFMITVASEIMAILCLAEDLMDLKNKMGEILVAYSTEGKPIYCKDLEVQGAMALLMKDAIKPNLVQTLENTPAIIHGGPFANIAHGCNSILGTKMALKLGDYVITEAGFGADLGAEKFFDIKCRKANLKPNCVVIVATVRALKYNGGIPKENLKEQNMEALSKGIKNLGKHIENVNKFGVPAVVAINKFISDTEEEIEFIKKYCKELGAEVSIAEVWEKGGNGGLELADKVLDTIENKESKFNPIYEETLNIKQKIETIAQEIYGAEGVDYSKEAEKQISEIEKLDLDKKPVCMAKTQYSLSDDAKLLGRPCGFRINVKEVRISNGAGFIVVLTGNVMTMPGLPKKPAANNMDVLSDGNIVGLF.

66–73 (TPAGEGKS) lines the ATP pocket.

It belongs to the formate--tetrahydrofolate ligase family.

It catalyses the reaction (6S)-5,6,7,8-tetrahydrofolate + formate + ATP = (6R)-10-formyltetrahydrofolate + ADP + phosphate. It functions in the pathway one-carbon metabolism; tetrahydrofolate interconversion. The chain is Formate--tetrahydrofolate ligase from Clostridium botulinum (strain Okra / Type B1).